A 187-amino-acid polypeptide reads, in one-letter code: Ethylene-responsive transcription factor ERF015 (187 aa).

The segment at residues 26 to 83 is a DNA-binding region (AP2/ERF); it reads CYRGVRKRSWGKWVSEIRVPKTGRRIWLGSYDAPEKAARAYDAALFCIRGEKGVYNFP.

This sequence belongs to the AP2/ERF transcription factor family. ERF subfamily.

The protein resides in the nucleus. Functionally, probably acts as a transcriptional activator. Binds to the GCC-box pathogenesis-related promoter element. May be involved in the regulation of gene expression by stress factors and by components of stress signal transduction pathways. The protein is Ethylene-responsive transcription factor ERF015 (ERF015) of Arabidopsis thaliana (Mouse-ear cress).